Reading from the N-terminus, the 161-residue chain is Peroxynitrite isomerase 1 (161 aa).

The short motif at 17–23 (GTWTGRG) is the GXWXGXG element. Histidine 152 contacts heme b.

It belongs to the nitrobindin family. In terms of assembly, homodimer. Heme b serves as cofactor.

It carries out the reaction peroxynitrite = nitrate. It functions in the pathway nitrogen metabolism. Heme-binding protein able to scavenge peroxynitrite and to protect free L-tyrosine against peroxynitrite-mediated nitration, by acting as a peroxynitrite isomerase that converts peroxynitrite to nitrate. Therefore, this protein likely plays a role in peroxynitrite sensing and in the detoxification of reactive nitrogen and oxygen species (RNS and ROS, respectively). Is able to bind nitric oxide (NO) in vitro, but may act as a sensor of peroxynitrite levels in vivo. The sequence is that of Peroxynitrite isomerase 1 from Mycolicibacterium paratuberculosis (strain ATCC BAA-968 / K-10) (Mycobacterium paratuberculosis).